Reading from the N-terminus, the 577-residue chain is Arginine--tRNA ligase (577 aa).

The short motif at 122–132 (PNVAKEMHVGH) is the 'HIGH' region element.

The protein belongs to the class-I aminoacyl-tRNA synthetase family. Monomer.

It is found in the cytoplasm. The enzyme catalyses tRNA(Arg) + L-arginine + ATP = L-arginyl-tRNA(Arg) + AMP + diphosphate. The sequence is that of Arginine--tRNA ligase from Escherichia coli O127:H6 (strain E2348/69 / EPEC).